A 455-amino-acid polypeptide reads, in one-letter code: uncharacterized protein (455 aa).

The signal sequence occupies residues 1 to 24 (MKTTKILLHTGVLALSLLATQVMA).

This is an uncharacterized protein from Pseudomonas aeruginosa (strain ATCC 15692 / DSM 22644 / CIP 104116 / JCM 14847 / LMG 12228 / 1C / PRS 101 / PAO1).